Consider the following 468-residue polypeptide: Aspartate ammonia-lyase (468 aa).

Residues Thr-101, Ser-140, Thr-141, Asn-142, Thr-187, and His-188 each contribute to the L-aspartate site. The interval 317–326 is SS loop; that stretch reads GSSIMPGKVN. Residue Ser-318 is the Proton acceptor of the active site. L-aspartate contacts are provided by Ser-319 and Lys-324.

It belongs to the class-II fumarase/aspartase family. Aspartase subfamily. In terms of assembly, homotetramer.

It carries out the reaction L-aspartate = fumarate + NH4(+). With respect to regulation, unlike E.coli aspartase, the enzyme is not activated by the presence of divalent metal ions at alkaline pH. Catalyzes the reversible conversion of L-aspartate to fumarate and ammonia. Is highly specific for L-aspartate in the deamination reaction, and cannot use alternative substrates such as D-aspartic acid, alpha-methyl-DL-aspartic acid, beta-methyl-DL-aspartic acid or L-glutamate. In the reverse reaction, alternative nucleophiles (such as hydroxylamine, hydrazine, methoxylamine and methylamine) can replace ammonia in vitro, leading to the formation of N-substituted aspartic acid derivatives. The polypeptide is Aspartate ammonia-lyase (Bacillus sp).